The chain runs to 507 residues: Glycerol kinase (507 aa).

Threonine 15 is a binding site for ADP. The ATP site is built by threonine 15, threonine 16, and serine 17. Sn-glycerol 3-phosphate is bound at residue threonine 15. Arginine 19 contacts ADP. 4 residues coordinate sn-glycerol 3-phosphate: arginine 85, glutamate 86, tyrosine 137, and aspartate 250. 5 residues coordinate glycerol: arginine 85, glutamate 86, tyrosine 137, aspartate 250, and glutamine 251. ADP contacts are provided by threonine 272 and glycine 316. Threonine 272, glycine 316, glutamine 320, and glycine 417 together coordinate ATP. An ADP-binding site is contributed by glycine 417.

The protein belongs to the FGGY kinase family.

The enzyme catalyses glycerol + ATP = sn-glycerol 3-phosphate + ADP + H(+). The protein operates within polyol metabolism; glycerol degradation via glycerol kinase pathway; sn-glycerol 3-phosphate from glycerol: step 1/1. Inhibited by fructose 1,6-bisphosphate (FBP). Key enzyme in the regulation of glycerol uptake and metabolism. Catalyzes the phosphorylation of glycerol to yield sn-glycerol 3-phosphate. This Mycoplasmopsis pulmonis (strain UAB CTIP) (Mycoplasma pulmonis) protein is Glycerol kinase.